The chain runs to 287 residues: Pantothenate synthetase (287 aa).

30-37 lines the ATP pocket; the sequence is MGALHSGH. The active-site Proton donor is the His-37. Gln-61 provides a ligand contact to (R)-pantoate. Gln-61 contributes to the beta-alanine binding site. Position 152–155 (152–155) interacts with ATP; it reads GQKD. Gln-158 provides a ligand contact to (R)-pantoate. ATP-binding positions include Ile-181 and 189 to 192; that span reads ESSR.

Belongs to the pantothenate synthetase family. Homodimer.

Its subcellular location is the cytoplasm. The catalysed reaction is (R)-pantoate + beta-alanine + ATP = (R)-pantothenate + AMP + diphosphate + H(+). It participates in cofactor biosynthesis; (R)-pantothenate biosynthesis; (R)-pantothenate from (R)-pantoate and beta-alanine: step 1/1. Functionally, catalyzes the condensation of pantoate with beta-alanine in an ATP-dependent reaction via a pantoyl-adenylate intermediate. This Corynebacterium efficiens (strain DSM 44549 / YS-314 / AJ 12310 / JCM 11189 / NBRC 100395) protein is Pantothenate synthetase.